An 873-amino-acid polypeptide reads, in one-letter code: Leucine--tRNA ligase (873 aa).

Residues 42–52 (PYPSGKLHMGH) carry the 'HIGH' region motif. The 'KMSKS' region motif lies at 628–632 (KMAKS). Lys-631 contacts ATP.

Belongs to the class-I aminoacyl-tRNA synthetase family.

It localises to the cytoplasm. It catalyses the reaction tRNA(Leu) + L-leucine + ATP = L-leucyl-tRNA(Leu) + AMP + diphosphate. This Aromatoleum aromaticum (strain DSM 19018 / LMG 30748 / EbN1) (Azoarcus sp. (strain EbN1)) protein is Leucine--tRNA ligase.